Reading from the N-terminus, the 1047-residue chain is MPKRTDIQSVLVIGSGPIVIGQAAEFDYAGAQACLALREEGIQVILVNNNPATVMTDEACADVVYFEPLTVASVKNIIERERPDGLLATLGGQTGLNLAMKLEEAGILEAYNVELLGTPMESIKKGEDREAFRQLMHELHEPVPESEIVHSVAEAVDFANTVGYPIIVRPAYTLGGAGGGIAESEEALIRIVKGGLELSPIQQCLIEKSIAGFKEIEYEVMRDSNDTCITVCNMENIDPVGVHTGDSIVVAPSQTLTDQEYQMLRSASLKIIRTLGIVGGCNIQFALDPDSKQYYLIEVNPRVSRSSALASKATGYPIARMAAKLSLGYGLHELKNPVTEDTYASFEPSLDYVVVKFPRWPFDKLVHVNRELGTQMKATGEVMAIERNLEAGLQKAVRSLEIKTHGLSLPSLSQWEDSELWVIVKKADDRRFFAILELLRRGVTIEAIHEQTKIDRFFLTSFAKLMTLEKEIAGQSLDDITSDELSTYKKYGFSDEWLASSWGVGLADVRHTRKALGVVPSYKMVDTCAAEFEAKTPYYYSSWTGENDLLLPEKAKERVLIIGSGPIRIGQGIEFDYCSVHGAKSLRARNFEAIIINNNPETVSTDYETADRLYFEPLAVEDVLNVIEVENVDHVIVQLGGQTAIGLTKGLEEAGVSILGTTQDVIDQLEDRERFYEFMRSVEVPHIPGKTAETKEELLKAAQSIGYPILLRPSYVIGGQGMFIASNQEELAAFCEDKNHSVTFPILVDAYYPGVEFEVDVLTDGSDIFIPGMFEHVEKAGVHSGDSMAVTPPPTLEAKWKQQAINYTRQIAKGMAYKGLFNIQFVLYDEELYVIEVNPRASRTVPIFSKATSLPLITYTIDVLFGKTIAELGLSAGYRKESPYYTVKAPVFSYQKLAGLDPLLEAEMKSTGELIAISKDLPSAFRKAFAWGEEQTPALFRKKGSVFCQVDRAYDTEWQPLLRQLKEKGYSVVTEEAMSFSEWLASEDAICLVSVPAPGQKTGKQNREEALKQRVTVVSDLATFEKMIECLEVKDGEPFLLPDVVMN.

The segment at 1 to 401 is carboxyphosphate synthetic domain; that stretch reads MPKRTDIQSV…GLQKAVRSLE (401 aa). Positions 129, 169, 175, 176, 208, 210, 215, 241, 242, 243, 284, and 298 each coordinate ATP. Positions 133–327 constitute an ATP-grasp 1 domain; sequence RQLMHELHEP…IARMAAKLSL (195 aa). The Mg(2+) site is built by Gln-284, Glu-298, and Asn-300. Mn(2+)-binding residues include Gln-284, Glu-298, and Asn-300. The oligomerization domain stretch occupies residues 402-549; it reads IKTHGLSLPS…YSSWTGENDL (148 aa). The segment at 550-933 is carbamoyl phosphate synthetic domain; it reads LLPEKAKERV…AFRKAFAWGE (384 aa). One can recognise an ATP-grasp 2 domain in the interval 676–865; that stretch reads YEFMRSVEVP…LITYTIDVLF (190 aa). Residues Arg-712, Ala-750, Glu-756, Gly-781, Val-782, His-783, Ser-784, Gln-824, and Glu-836 each contribute to the ATP site. 3 residues coordinate Mg(2+): Gln-824, Glu-836, and Asn-838. 3 residues coordinate Mn(2+): Gln-824, Glu-836, and Asn-838. An allosteric domain region spans residues 934–1047; that stretch reads EQTPALFRKK…PFLLPDVVMN (114 aa). The region spanning 937 to 1047 is the MGS-like domain; that stretch reads PALFRKKGSV…PFLLPDVVMN (111 aa).

This sequence belongs to the CarB family. Composed of two chains; the small (or glutamine) chain promotes the hydrolysis of glutamine to ammonia, which is used by the large (or ammonia) chain to synthesize carbamoyl phosphate. Tetramer of heterodimers (alpha,beta)4. Mg(2+) is required as a cofactor. Mn(2+) serves as cofactor.

The enzyme catalyses hydrogencarbonate + L-glutamine + 2 ATP + H2O = carbamoyl phosphate + L-glutamate + 2 ADP + phosphate + 2 H(+). It catalyses the reaction hydrogencarbonate + NH4(+) + 2 ATP = carbamoyl phosphate + 2 ADP + phosphate + 2 H(+). The protein operates within amino-acid biosynthesis; L-arginine biosynthesis; carbamoyl phosphate from bicarbonate: step 1/1. Functionally, large subunit of the glutamine-dependent carbamoyl phosphate synthetase (CPSase). CPSase catalyzes the formation of carbamoyl phosphate from the ammonia moiety of glutamine, carbonate, and phosphate donated by ATP, constituting the first step of the biosynthetic pathway leading to arginine and/or urea. The large subunit (synthetase) binds the substrates ammonia (free or transferred from glutamine from the small subunit), hydrogencarbonate and ATP and carries out an ATP-coupled ligase reaction, activating hydrogencarbonate by forming carboxy phosphate which reacts with ammonia to form carbamoyl phosphate. This chain is Carbamoyl phosphate synthase arginine-specific large chain, found in Halalkalibacterium halodurans (strain ATCC BAA-125 / DSM 18197 / FERM 7344 / JCM 9153 / C-125) (Bacillus halodurans).